Consider the following 368-residue polypeptide: High affinity iron permease 1 (368 aa).

A run of 7 helical transmembrane segments spans residues Val-8 to Leu-28, Val-50 to Ala-70, Ile-86 to Met-106, Ala-142 to Ile-162, Ser-173 to Tyr-193, Phe-204 to Val-224, and Ser-287 to Phe-307. The interval Asp-346–Ala-368 is disordered. Residues Ala-353 to Ala-368 show a composition bias toward basic and acidic residues.

Belongs to the oxidase-dependent Fe transporter (OFeT) (TC 9.A.10.1) family.

It is found in the cell membrane. Its function is as follows. High affinity iron permease required for iron uptake in iron-depleted environments. Required for full virulence in mice. The polypeptide is High affinity iron permease 1 (Rhizopus delemar (strain RA 99-880 / ATCC MYA-4621 / FGSC 9543 / NRRL 43880) (Mucormycosis agent)).